A 608-amino-acid chain; its full sequence is Granule-bound starch synthase 1, chloroplastic/amyloplastic (608 aa).

A chloroplast-targeting transit peptide spans 1–78; that stretch reads MATVIAAHFV…NGRPAAKIIC (78 aa). Lysine 96 is an ADP-alpha-D-glucose binding site. The disordered stretch occupies residues 587–608; it reads GSEPGTEGEEIAPLAKENVPTP.

This sequence belongs to the glycosyltransferase 1 family. Bacterial/plant glycogen synthase subfamily. As to expression, synthesized in a number of different organs, but most abundantly in tubers.

The protein localises to the plastid. It is found in the chloroplast. Its subcellular location is the amyloplast. It catalyses the reaction an NDP-alpha-D-glucose + [(1-&gt;4)-alpha-D-glucosyl](n) = [(1-&gt;4)-alpha-D-glucosyl](n+1) + a ribonucleoside 5'-diphosphate + H(+). It participates in glycan biosynthesis; starch biosynthesis. Functionally, responsible for the synthesis of amylose in reserve starch. The protein is Granule-bound starch synthase 1, chloroplastic/amyloplastic (WAXY) of Manihot esculenta (Cassava).